The following is a 398-amino-acid chain: Unsaturated chondroitin disaccharide hydrolase (398 aa).

Residue Asp115 is the Nucleophile of the active site. Residues Asp115, Asp175, Gly233, Thr235, Arg247, Trp251, Ser365, and Ser368 each coordinate substrate. Catalysis depends on Asp175, which acts as the Proton donor.

It belongs to the glycosyl hydrolase 88 family. In terms of assembly, monomer.

It carries out the reaction beta-D-4-deoxy-Delta(4)-GlcpA-(1-&gt;3)-beta-D-GalpNAc6S + H2O = N-acetyl-beta-D-galactosamine 6-sulfate + 5-dehydro-4-deoxy-D-glucuronate. Catalyzes the hydrolysis of unsaturated hyaluronate and chondroitin disaccharides. Also degrades unsaturated heparin disaccharides. Releases 4-deoxy-4,5-didehydro D-glucuronic acid or 4-deoxy-4,5-didehydro L-iduronic acid from chondroitin disaccharides, hyaluronan disaccharides and heparin disaccharides and cleaves both glycosidic (1-&gt;3) and (1-&gt;4) bonds. Prefers sulfated glycosaminoglycans compared to unsulfated glycosaminoglycans. Probably required for mammalian cells invasion through the degradation of extracellular sulfated glycosaminoglycans such as chondroitin and hyaluronan. The chain is Unsaturated chondroitin disaccharide hydrolase from Streptococcus agalactiae serotype III (strain NEM316).